We begin with the raw amino-acid sequence, 234 residues long: Conidial surface nicotinamide adenine dinucleotide glycohydrolase nadA (234 aa).

The first 20 residues, 1–20 (MIFTNAILVISALLPATVLS), serve as a signal peptide directing secretion. The interval 21 to 117 (LQHTEDSLFP…LDTEEQPILG (97 aa)) is thump. 2 disulfides stabilise this stretch: Cys33–Cys80 and Cys38–Cys50. Asn45, Asn95, and Asn118 each carry an N-linked (GlcNAc...) asparagine glycan. Residues 120 to 212 (TLPVGMKLDR…GLIDDGYLRR (93 aa)) form the TNT domain. Arg129 is a catalytic residue. The NAD(+) site is built by Phe130, Thr136, and Arg148. Gln194 is a catalytic residue. Residues Ser216, Asp219, Glu220, and Glu223 each contribute to the Ca(2+) site.

It belongs to the fungal surface NADase family. In terms of assembly, homodimer. N-glycosylated.

The protein resides in the secreted. The catalysed reaction is NAD(+) + H2O = ADP-D-ribose + nicotinamide + H(+). It catalyses the reaction NADP(+) + H2O = ADP-D-ribose 2'-phosphate + nicotinamide + H(+). Its activity is regulated as follows. The catalytic activity is positively regulated by calcium via its binding to the calcium-binding site. Conidial surface nicotinamide adenine dinucleotide glycohydrolase that cleave NAD(+) and NADP(+) but not their reduced counterparts, NADH and NADPH. Lacks both ADP-ribosyl cyclase and base exchange activity and does not mediate synthesis of calcium messengers cADPR or NAADP. Plays a role in pathogenicity by depleting the host's NAD(+) pool. In Aspergillus fumigatus (strain ATCC MYA-4609 / CBS 101355 / FGSC A1100 / Af293) (Neosartorya fumigata), this protein is Conidial surface nicotinamide adenine dinucleotide glycohydrolase nadA.